Here is a 197-residue protein sequence, read N- to C-terminus: Holliday junction branch migration complex subunit RuvA (197 aa).

Residues 1–63 (MYDYIKGNLT…EDAHLLYGFH (63 aa)) are domain I. Residues 64-142 (TEDEKAVFLN…DINEVSTDKS (79 aa)) form a domain II region. Residues 143 to 147 (KVSTI) form a flexible linker region. Residues 148–197 (NNNQELEEAVEALLALGYKTNELKKIEKFFEGTTDTAENYIKSALKMLMK) form a domain III region.

The protein belongs to the RuvA family. In terms of assembly, homotetramer. Forms an RuvA(8)-RuvB(12)-Holliday junction (HJ) complex. HJ DNA is sandwiched between 2 RuvA tetramers; dsDNA enters through RuvA and exits via RuvB. An RuvB hexamer assembles on each DNA strand where it exits the tetramer. Each RuvB hexamer is contacted by two RuvA subunits (via domain III) on 2 adjacent RuvB subunits; this complex drives branch migration. In the full resolvosome a probable DNA-RuvA(4)-RuvB(12)-RuvC(2) complex forms which resolves the HJ.

Its subcellular location is the cytoplasm. Its function is as follows. The RuvA-RuvB-RuvC complex processes Holliday junction (HJ) DNA during genetic recombination and DNA repair, while the RuvA-RuvB complex plays an important role in the rescue of blocked DNA replication forks via replication fork reversal (RFR). RuvA specifically binds to HJ cruciform DNA, conferring on it an open structure. The RuvB hexamer acts as an ATP-dependent pump, pulling dsDNA into and through the RuvAB complex. HJ branch migration allows RuvC to scan DNA until it finds its consensus sequence, where it cleaves and resolves the cruciform DNA. The polypeptide is Holliday junction branch migration complex subunit RuvA (Streptococcus mutans serotype c (strain ATCC 700610 / UA159)).